A 330-amino-acid chain; its full sequence is MPPRLLLTSGEPAGIGPDLCVLLSRRPFPCGITVLGDPDLLESRARLLGVPIELRRVVSGDVVPPHEPGVLHVLPTRRQPGTAPGKLDPANAAYVLETIADGARACLAGHYDALVTAPVQKSVINEAGIAFTGHTEFIAGITGGSPVMMLAAEGFRVALATTHLPLAEVSRAITVERLTGVLGVLHEDLVRRFGFSRPRILVCGLNPHAGEGGHLGGEEITVIEPVLARLRQDGMDLTGPLPADTLFLPHNLDRADAVLAMYHDQGLPVLKYAGFSRAVNITLGLPIIRTSVDHGTALDRAGTGQIDTGSLEEAVRVAMEMATGRPAESP.

Residues histidine 134 and threonine 135 each coordinate substrate. Positions 163, 208, and 263 each coordinate a divalent metal cation. Substrate-binding residues include lysine 271, asparagine 280, and arginine 289.

It belongs to the PdxA family. Homodimer. Zn(2+) is required as a cofactor. The cofactor is Mg(2+). Co(2+) serves as cofactor.

It is found in the cytoplasm. The enzyme catalyses 4-(phosphooxy)-L-threonine + NAD(+) = 3-amino-2-oxopropyl phosphate + CO2 + NADH. It participates in cofactor biosynthesis; pyridoxine 5'-phosphate biosynthesis; pyridoxine 5'-phosphate from D-erythrose 4-phosphate: step 4/5. In terms of biological role, catalyzes the NAD(P)-dependent oxidation of 4-(phosphooxy)-L-threonine (HTP) into 2-amino-3-oxo-4-(phosphooxy)butyric acid which spontaneously decarboxylates to form 3-amino-2-oxopropyl phosphate (AHAP). The sequence is that of 4-hydroxythreonine-4-phosphate dehydrogenase from Methylococcus capsulatus (strain ATCC 33009 / NCIMB 11132 / Bath).